Reading from the N-terminus, the 207-residue chain is MKEIKLIVGLANPIKKYNDTRHNVGSWLVNSLVTQQNKKLKKNNKFLGYSTEINILSKNIHVLVPDTFMNLSGISVLAISNFYNIKLHEILVVHDELDLKPGNVKFRLRSSHNGHNGIRNVLAVLGTNIKFLRIQIGIGRPINSGYKISKFVLSKPNVSEKLLINRAILCAIRVIYDSINQRNVIMTESSLNSMLDHYMNSCVIHHN.

Position 17 (Tyr-17) interacts with tRNA. The active-site Proton acceptor is the His-22. Residues Phe-68, Asn-70, and Asn-116 each coordinate tRNA.

Belongs to the PTH family. Monomer.

The protein resides in the cytoplasm. The catalysed reaction is an N-acyl-L-alpha-aminoacyl-tRNA + H2O = an N-acyl-L-amino acid + a tRNA + H(+). In terms of biological role, hydrolyzes ribosome-free peptidyl-tRNAs (with 1 or more amino acids incorporated), which drop off the ribosome during protein synthesis, or as a result of ribosome stalling. Catalyzes the release of premature peptidyl moieties from peptidyl-tRNA molecules trapped in stalled 50S ribosomal subunits, and thus maintains levels of free tRNAs and 50S ribosomes. This Buchnera aphidicola subsp. Baizongia pistaciae (strain Bp) protein is Peptidyl-tRNA hydrolase.